The primary structure comprises 237 residues: Phosphoribosylaminoimidazole-succinocarboxamide synthase (237 aa).

It belongs to the SAICAR synthetase family.

It catalyses the reaction 5-amino-1-(5-phospho-D-ribosyl)imidazole-4-carboxylate + L-aspartate + ATP = (2S)-2-[5-amino-1-(5-phospho-beta-D-ribosyl)imidazole-4-carboxamido]succinate + ADP + phosphate + 2 H(+). The protein operates within purine metabolism; IMP biosynthesis via de novo pathway; 5-amino-1-(5-phospho-D-ribosyl)imidazole-4-carboxamide from 5-amino-1-(5-phospho-D-ribosyl)imidazole-4-carboxylate: step 1/2. The polypeptide is Phosphoribosylaminoimidazole-succinocarboxamide synthase (Listeria monocytogenes serotype 4a (strain HCC23)).